The primary structure comprises 169 residues: S-ribosylhomocysteine lyase (169 aa).

Residues H54, H58, and C128 each coordinate Fe cation.

It belongs to the LuxS family. As to quaternary structure, homodimer. The cofactor is Fe cation.

It carries out the reaction S-(5-deoxy-D-ribos-5-yl)-L-homocysteine = (S)-4,5-dihydroxypentane-2,3-dione + L-homocysteine. Its function is as follows. Involved in the synthesis of autoinducer 2 (AI-2) which is secreted by bacteria and is used to communicate both the cell density and the metabolic potential of the environment. The regulation of gene expression in response to changes in cell density is called quorum sensing. Catalyzes the transformation of S-ribosylhomocysteine (RHC) to homocysteine (HC) and 4,5-dihydroxy-2,3-pentadione (DPD). This Shewanella frigidimarina (strain NCIMB 400) protein is S-ribosylhomocysteine lyase.